We begin with the raw amino-acid sequence, 88 residues long: Yop proteins translocation protein S (88 aa).

The next 2 membrane-spanning stretches (helical) occupy residues 15-35 and 49-69; these read WLVLVLSMPPVLVAAVVGTLV and LGFVIKLIAVVVTLFATASWL.

It belongs to the FliQ/MopD/SpaQ family.

Its subcellular location is the cell membrane. Its function is as follows. Component of the Yop secretion machinery. In Yersinia pestis, this protein is Yop proteins translocation protein S (yscS).